The sequence spans 463 residues: Serine/threonine-protein kinase tricornered (463 aa).

The region spanning F93–F394 is the Protein kinase domain. ATP is bound by residues I99–V107 and K122. The segment at Y119–T180 is interaction with mats and Mob1. D216 (proton acceptor) is an active-site residue. Residue S292 is modified to Phosphoserine. In terms of domain architecture, AGC-kinase C-terminal spans R395 to E463. T453 is subject to Phosphothreonine.

Belongs to the protein kinase superfamily. AGC Ser/Thr protein kinase family. Interacts with, and is activated by, Mob1. The cofactor is Mg(2+). Expressed in the peripheral and central nervous system (at protein level). Expressed in the wing imaginal disk.

The protein localises to the cytoplasm. Its subcellular location is the nucleus. The enzyme catalyses L-seryl-[protein] + ATP = O-phospho-L-seryl-[protein] + ADP + H(+). The catalysed reaction is L-threonyl-[protein] + ATP = O-phospho-L-threonyl-[protein] + ADP + H(+). With respect to regulation, activated by fry. In terms of biological role, serine/threonine-protein kinase involved in controlling cell structure and proliferation of a variety of polarized outgrowths including epidermal hairs, bristles, arista laterals, and dendrites. Together with fry, maintains the integrity of epidermal hairs and is an essential component of the signaling pathway regulating dendritic branching of sensory neurons. Reduces neurite outgrowth by phosphorylating pav, thereby inhibiting its function in microtubule-microtubule sliding. This chain is Serine/threonine-protein kinase tricornered, found in Drosophila melanogaster (Fruit fly).